Here is a 697-residue protein sequence, read N- to C-terminus: Methionine--tRNA ligase (697 aa).

A 'HIGH' region motif is present at residues 12 to 22 (PYANGHFHIGH). Residues Cys143, Cys146, Cys156, and Cys159 each coordinate Zn(2+). A 'KMSKS' region motif is present at residues 342–346 (KMSKS). Residue Lys345 coordinates ATP. A disordered region spans residues 557–577 (FEPPAEPSPQTSPAAAGAGAV). In terms of domain architecture, tRNA-binding spans 591 to 697 (DFTKIDLRLA…PGAVPGLRVR (107 aa)).

This sequence belongs to the class-I aminoacyl-tRNA synthetase family. MetG type 1 subfamily. In terms of assembly, homodimer. It depends on Zn(2+) as a cofactor.

Its subcellular location is the cytoplasm. It carries out the reaction tRNA(Met) + L-methionine + ATP = L-methionyl-tRNA(Met) + AMP + diphosphate. In terms of biological role, is required not only for elongation of protein synthesis but also for the initiation of all mRNA translation through initiator tRNA(fMet) aminoacylation. This is Methionine--tRNA ligase from Methylibium petroleiphilum (strain ATCC BAA-1232 / LMG 22953 / PM1).